A 160-amino-acid chain; its full sequence is Phosphopantetheine adenylyltransferase (160 aa).

Substrate is bound at residue serine 10. ATP contacts are provided by residues 10-11 and histidine 18; that span reads SF. 3 residues coordinate substrate: lysine 42, threonine 74, and arginine 88. Residues 89-91, glutamate 99, and 124-130 contribute to the ATP site; these read GLR and YSFVSST.

The protein belongs to the bacterial CoaD family. As to quaternary structure, homohexamer. It depends on Mg(2+) as a cofactor.

It localises to the cytoplasm. It catalyses the reaction (R)-4'-phosphopantetheine + ATP + H(+) = 3'-dephospho-CoA + diphosphate. The protein operates within cofactor biosynthesis; coenzyme A biosynthesis; CoA from (R)-pantothenate: step 4/5. In terms of biological role, reversibly transfers an adenylyl group from ATP to 4'-phosphopantetheine, yielding dephospho-CoA (dPCoA) and pyrophosphate. This is Phosphopantetheine adenylyltransferase from Leptospira biflexa serovar Patoc (strain Patoc 1 / Ames).